The sequence spans 363 residues: UDP-3-O-acylglucosamine N-acyltransferase (363 aa).

The active-site Proton acceptor is His-237. The tract at residues 338–363 (EQNSTDRAPNAKMLEVGVDPETTCSS) is disordered.

Belongs to the transferase hexapeptide repeat family. LpxD subfamily. Homotrimer.

It carries out the reaction a UDP-3-O-[(3R)-3-hydroxyacyl]-alpha-D-glucosamine + a (3R)-hydroxyacyl-[ACP] = a UDP-2-N,3-O-bis[(3R)-3-hydroxyacyl]-alpha-D-glucosamine + holo-[ACP] + H(+). It participates in bacterial outer membrane biogenesis; LPS lipid A biosynthesis. Its function is as follows. Catalyzes the N-acylation of UDP-3-O-acylglucosamine using 3-hydroxyacyl-ACP as the acyl donor. Is involved in the biosynthesis of lipid A, a phosphorylated glycolipid that anchors the lipopolysaccharide to the outer membrane of the cell. This chain is UDP-3-O-acylglucosamine N-acyltransferase, found in Synechococcus sp. (strain JA-2-3B'a(2-13)) (Cyanobacteria bacterium Yellowstone B-Prime).